The following is a 302-amino-acid chain: Glutaminase (302 aa).

Substrate is bound by residues serine 61, asparagine 111, glutamate 155, asparagine 162, tyrosine 186, tyrosine 238, and valine 256.

Belongs to the glutaminase family. Homotetramer.

The catalysed reaction is L-glutamine + H2O = L-glutamate + NH4(+). In Pseudomonas fluorescens (strain ATCC BAA-477 / NRRL B-23932 / Pf-5), this protein is Glutaminase.